Consider the following 296-residue polypeptide: uncharacterized protein (296 aa).

A run of 10 helical transmembrane segments spans residues 8-28, 34-54, 63-83, 89-109, 121-141, 147-167, 183-203, 208-228, 238-258, and 261-281; these read LFVL…ALAP, LAFG…AVWI, WAWP…PLFF, TGIA…AGTL, SWWI…SDSS, VAGV…TLIS, VFMI…ISWI, GLGT…FLFA, AAVT…VFFI, and MLSP…LVIS. EamA domains are found at residues 15-138 and 158-282; these read FFWG…LLFS and ASFA…VISA.

The protein belongs to the EamA transporter family.

It localises to the cell membrane. This is an uncharacterized protein from Bacillus subtilis (strain 168).